The primary structure comprises 131 residues: Small ribosomal subunit protein bS6 (131 aa).

The interval Val-96–Glu-131 is disordered. Basic and acidic residues predominate over residues Lys-104–Asp-122.

Belongs to the bacterial ribosomal protein bS6 family.

In terms of biological role, binds together with bS18 to 16S ribosomal RNA. The sequence is that of Small ribosomal subunit protein bS6 from Shewanella sp. (strain ANA-3).